Reading from the N-terminus, the 623-residue chain is Aspartate--tRNA(Asp/Asn) ligase (623 aa).

Glu-175 contacts L-aspartate. The segment at Gln-199 to Lys-202 is aspartate. Residues Arg-221 and His-455 each coordinate L-aspartate. Arg-221 to Glu-223 is a binding site for ATP. Glu-517 contributes to the ATP binding site. Arg-524 contacts L-aspartate. ATP is bound at residue Gly-569–Arg-572.

The protein belongs to the class-II aminoacyl-tRNA synthetase family. Type 1 subfamily. Homodimer.

The protein resides in the cytoplasm. The enzyme catalyses tRNA(Asx) + L-aspartate + ATP = L-aspartyl-tRNA(Asx) + AMP + diphosphate. Aspartyl-tRNA synthetase with relaxed tRNA specificity since it is able to aspartylate not only its cognate tRNA(Asp) but also tRNA(Asn). Reaction proceeds in two steps: L-aspartate is first activated by ATP to form Asp-AMP and then transferred to the acceptor end of tRNA(Asp/Asn). The sequence is that of Aspartate--tRNA(Asp/Asn) ligase from Methylocella silvestris (strain DSM 15510 / CIP 108128 / LMG 27833 / NCIMB 13906 / BL2).